The primary structure comprises 340 residues: uncharacterized protein (340 aa).

The protein localises to the virion. This is an uncharacterized protein from Acanthamoeba polyphaga (Amoeba).